The chain runs to 893 residues: MFPLKDAEMGAFTFFASALPHDVCGSNGLPLTPNSIKILGRFQILKTITHPRLCQYVDISRGKHERLVVVAEHCERSLEDLLRERKPVSCSTVLCIAFEVLQGLQYMNKHGIVHRALSPHNILLDRKGHIKLAKFGLYHMTAHGDDVDFPIGYPSYLAPEVIAQGIFKTTDHMPSKKPLPSGPKSDVWSLGIILFELCVGRKLFQSLDISERLKFLLTLDCVDDTLIVLAEEHGCLDIIKELPETVIDLLNKCLTFHPSKRPTPDQLMKDKVFSEVSPLYTPFTKPASLFSSSLRCADLTLPEDISQLCKDINNDYLAERSIEEVYYLWCLAGGDLEKELVNKEIIRSKPPICTLPNFLFEDGESFGQGRDRSSLLDDTTVTLSLCQLRNRLKDVGGEAFYPLLEDDQSNLPHSNSNNELSAAATLPLIIREKDTEYQLNRIILFDRLLKAYPYKKNQIWKEARVDIPPLMRGLTWAALLGVEGAIHAKYDAIDKDTPIPTDRQIEVDIPRCHQYDELLSSPEGHAKFRRVLKAWVVSHPDLVYWQGLDSLCAPFLYLNFNNEALAYACMSAFIPKYLYNFFLKDNSHVIQEYLTVFSQMIAFHDPELSNHLNEIGFIPDLYAIPWFLTMFTHVFPLHKIFHLWDTLLLGNSSFPFCIGVAILQQLRDRLLANGFNECILLFSDLPEIDIERCVRESINLFCWTPKSATYRQHAQPPKPSSDSSGGRSSAPYFSAECPDPPKTDLSRESIPLNDLKSEVSPRISAEDLIDLCELTVTGHFKTPSKKTKSSKPKLLVVDIRNSEDFIRGHISGSINIPFSAAFTAEGELTQGPYTAMLQNFKGKVIVIVGHVAKHTAEFAAHLVKMKYPRICILDGGINKIKPTGLLTIPSPQI.

One can recognise a Protein kinase domain in the interval 1–273; that stretch reads MFPLKDAEMG…PDQLMKDKVF (273 aa). Residues 466–651 enclose the Rab-GAP TBC domain; it reads DIPPLMRGLT…HLWDTLLLGN (186 aa). The disordered stretch occupies residues 710-749; it reads YRQHAQPPKPSSDSSGGRSSAPYFSAECPDPPKTDLSRES. The span at 720 to 729 shows a compositional bias: low complexity; sequence SSDSSGGRSS. A Rhodanese domain is found at 790 to 889; it reads SKPKLLVVDI…IKPTGLLTIP (100 aa).

The protein belongs to the protein kinase superfamily. As to quaternary structure, component of the FERRY complex composed of five subunits, TBCK, PPP1R21, FERRY3, CRYZL1 and GATD1 with a ratio of 1:2:1:2:4, respectively.

It is found in the cytoplasm. The protein localises to the cytoskeleton. It localises to the spindle. The protein resides in the midbody. Its subcellular location is the early endosome. Component of the FERRY complex (Five-subunit Endosomal Rab5 and RNA/ribosome intermediary). The FERRY complex directly interacts with mRNAs and RAB5A, and functions as a RAB5A effector involved in the localization and the distribution of specific mRNAs most likely by mediating their endosomal transport. The complex recruits mRNAs and ribosomes to early endosomes through direct mRNA-interaction. Also involved in the modulation of mTOR signaling and expression of mTOR complex components. Involved in the control of actin-cytoskeleton organization. The sequence is that of TBC domain-containing protein kinase-like protein from Homo sapiens (Human).